The chain runs to 397 residues: MAGSRKVNDLLEENKGNVDTITGSLSTQKGEDKENVSPEKVSTSVETRKLDRALKSQSMKGNSGFPTEVTNFKSFSTGGRTALKQSSLQACMQKNSEVDKSSFGMKTWTSVDSEHSSSLKVWEFSDSEAAPASSWSTLPNRALLCKTLPLDVGRCTCLIVKEQSPEGLSHGSVYSLYTHEGRGRKDRKLAVAYHSRRNGKSIFRVAQNVKGLLCSSDESYVGSMTANLLGSKYYIWDKGVRVGSVGKMVKPLLSVVIFTPTITTWTGSYRRMRTLLPKQQPMQKNNNKQVQQASKLPLDWLENKEKIQKLCSRIPHYNKISKQHELDFRDRGRTGLRIQSSVKNFQLTLTETPRQTILQMGRVDKARYVIDFRYPFSGYQAFCICLASIDSKLCCTV.

The segment covering 1-16 (MAGSRKVNDLLEENKG) has biased composition (basic and acidic residues). Residues 1-46 (MAGSRKVNDLLEENKGNVDTITGSLSTQKGEDKENVSPEKVSTSVE) form a disordered region. Positions 17–28 (NVDTITGSLSTQ) are enriched in polar residues.

The protein belongs to the TUB family. As to expression, mostly expressed in roots, flowers and siliques.

The chain is Tubby-like protein 8 from Arabidopsis thaliana (Mouse-ear cress).